A 145-amino-acid chain; its full sequence is Large ribosomal subunit protein uL13 (145 aa).

This sequence belongs to the universal ribosomal protein uL13 family. As to quaternary structure, part of the 50S ribosomal subunit.

Its function is as follows. This protein is one of the early assembly proteins of the 50S ribosomal subunit, although it is not seen to bind rRNA by itself. It is important during the early stages of 50S assembly. The polypeptide is Large ribosomal subunit protein uL13 (Staphylococcus aureus (strain Mu3 / ATCC 700698)).